The following is a 919-amino-acid chain: Glutamate receptor ionotropic, kainate 3 (919 aa).

A signal peptide spans 1-31 (MTAPWRRLRSLVWEYWAGLLVCAFWIPDSRG). The Extracellular portion of the chain corresponds to 32 to 563 (MPHVIRIGGI…VFSFLNPLSP (532 aa)). Asparagine 70, asparagine 76, asparagine 278, asparagine 381, asparagine 415, asparagine 426, and asparagine 433 each carry an N-linked (GlcNAc...) asparagine glycan. Cysteines 99 and 350 form a disulfide. The L-glutamate site is built by proline 518, threonine 520, and arginine 525. Residues asparagine 548 and asparagine 551 are each glycosylated (N-linked (GlcNAc...) asparagine). A helical transmembrane segment spans residues 564-584 (DIWMYVLLAYLGVSCVLFVIA). Residues 585-636 (RFSPYEWYDAHPCNPGSEVVENNFTLLNSFWFGMGSLMQQGSELMPKALSTR) are Cytoplasmic-facing. Residues 637–657 (IIGGIWWFFTLIIISSYTANL) form a helical membrane-spanning segment. Topologically, residues 658–820 (AAFLTVERME…KEASALGIQK (163 aa)) are extracellular. L-glutamate contacts are provided by alanine 691, threonine 692, and glutamate 739. Residue asparagine 752 is glycosylated (N-linked (GlcNAc...) asparagine). Residues 821-841 (IGGIFIVLAAGLVLSVLVAVG) form a helical membrane-spanning segment. The Cytoplasmic portion of the chain corresponds to 842–919 (EFVYKLRKTA…CSTSLAPVFP (78 aa)). Serine 869 is subject to Phosphoserine. A Glycyl lysine isopeptide (Lys-Gly) (interchain with G-Cter in SUMO1) cross-link involves residue lysine 887.

The protein belongs to the glutamate-gated ion channel (TC 1.A.10.1) family. GRIK3 subfamily. As to quaternary structure, homotetramer, and heterotetramer with either GRIK4 or GRIK5. Can form functional heteromeric receptors with GRIK2. Interacts with PRKCABP. Interacts with NETO2.

It localises to the cell membrane. It is found in the postsynaptic cell membrane. It carries out the reaction Ca(2+)(in) = Ca(2+)(out). In terms of biological role, ionotropic glutamate receptor that functions as a cation-permeable ligand-gated ion channel, gated by L-glutamate and the glutamatergic agonist kainic acid. Binding of the excitatory neurotransmitter L-glutamate induces a conformation change, leading to the opening of the cation channel, and thereby converts the chemical signal to an electrical impulse. The receptor then desensitizes rapidly and enters a transient inactive state, characterized by the presence of bound agonist. In association with GRIK2, involved in presynaptic facilitation of glutamate release at hippocampal mossy fiber synapses. This chain is Glutamate receptor ionotropic, kainate 3 (GRIK3), found in Macaca fascicularis (Crab-eating macaque).